The sequence spans 253 residues: DNA repair protein RecO (253 aa).

This sequence belongs to the RecO family.

Functionally, involved in DNA repair and RecF pathway recombination. The sequence is that of DNA repair protein RecO from Staphylococcus epidermidis (strain ATCC 35984 / DSM 28319 / BCRC 17069 / CCUG 31568 / BM 3577 / RP62A).